A 212-amino-acid chain; its full sequence is Ribosomal RNA small subunit methyltransferase G (212 aa).

S-adenosyl-L-methionine contacts are provided by residues G72, L77, 123-124, and R138; that span reads VE.

It belongs to the methyltransferase superfamily. RNA methyltransferase RsmG family.

It localises to the cytoplasm. The enzyme catalyses guanosine(527) in 16S rRNA + S-adenosyl-L-methionine = N(7)-methylguanosine(527) in 16S rRNA + S-adenosyl-L-homocysteine. Its function is as follows. Specifically methylates the N7 position of guanine in position 527 of 16S rRNA. In Histophilus somni (strain 129Pt) (Haemophilus somnus), this protein is Ribosomal RNA small subunit methyltransferase G.